Consider the following 675-residue polypeptide: MSENVELRRAHILANHILRSPRPSSNPSLTPEVCFQYSPPELNESYGFEVKEMRKLLDGHNLEERDWLYGLMMQSNLFNPKQRGGQIFVSPDYNQTMEQQRQISMKRIFYLLEKGVFQGWLTETGPEAELKKFALYEVCGIYDYSLSAKLGVHFLLWGNAVKFFGTKRHHEKWLKDTEDYVVKGCFAMTELGHGTNVRGIETVTTYDPTTEEFVINTPCESAQKYWIGEAANHANHAIVISQLSMNGTNQGIHVFIAQIRDHDGNTCPNVRIADCGHKIGLNGVDNGRIWFDNLRIPRENLLNSVADVLADGKYVSSIKDPDQRFGAFLAPLTSGRVTIASSAIYSAKLGLAVAIRYSLSRRAFSVAANGPEVLLLDYPSHQRRLLPLLAKTYAMSFAVNDLKMIYVKRTPETNKAIHVVSSGFKAVLTWHNMRTLQECREAVGGQGLKTENRVGHLKGEYDVQTTFEGDNNVLMQLVSKALFAEYVSCKKRNKPFKGLGLEHMNSPRPVLPTQLTSSTLRCSQFQKSVFCLRERDLLERFTSEVAELQGRGESREFLFLLNHQLSEDLSKAFTEKAILQTVLDAEAKLPPGSVKDVLGLVRSMYALISLEEDPSLLRYGHLSRDNVGDVRKEVSKLCGELRPHALALVASFGIPDAFLSPIAFNWVEANAWSSL.

The N-terminal 34 residues, 1 to 34 (MSENVELRRAHILANHILRSPRPSSNPSLTPEVC), are a transit peptide targeting the peroxisome. Residue 442–457 (AVGGQGLKTENRVGHL) participates in FAD binding.

Belongs to the acyl-CoA oxidase family. FAD serves as cofactor.

The protein localises to the peroxisome. The enzyme catalyses a 2,3-saturated acyl-CoA + O2 = a (2E)-enoyl-CoA + H2O2. Its function is as follows. Catalyzes the desaturation of acyl-CoAs to 2-trans-enoyl-CoAs. This Arabidopsis thaliana (Mouse-ear cress) protein is Putative acyl-coenzyme A oxidase 3.2, peroxisomal (ACX3.2).